A 377-amino-acid polypeptide reads, in one-letter code: MKLSHMLLSLASLGVATALPRTPNHNAATTAFPSTSGLHFTIDGKTGYFAGTNSYWIGFLTNNDDVDLVMSQLAASDLKILRVWGFNDVNTKPTDGTVWYQLHANGTSTINTGADGLQRLDYVVTSAEKYGVKLIINFVNEWTDYGGMQAYVTAYGAAAQTDFYTNTAIQAAYKNYIKAVVSRYSSSAAIFAWELANEPRCQGCDTSVLYNWISDTSKYIKSLDSKHLVTIGDEGFGLDVDSDGSYPYTYGEGLNFTKNLGISTIDFGTLHLYPDSWGTSYDWGNGWITAHAAACKAVGKPCLLEEYGVTSNHCAVESPWQQTAGNATGISGDLYWQYGTTFSWGQSPNDGNTFYYNTSDFTCLVTDHVAAINAQSK.

An N-terminal signal peptide occupies residues 1–18 (MKLSHMLLSLASLGVATA). A substrate-binding site is contributed by Trp84. Asn105 is a glycosylation site (N-linked (GlcNAc...) asparagine). Asn197 is a substrate binding site. Catalysis depends on Glu198, which acts as the Proton donor. Residue Asn255 is glycosylated (N-linked (GlcNAc...) asparagine). Residue Tyr273 participates in substrate binding. Glu306 acts as the Nucleophile in catalysis. Asn326 carries an N-linked (GlcNAc...) asparagine glycan. A substrate-binding site is contributed by Trp336. Residue Asn357 is glycosylated (N-linked (GlcNAc...) asparagine).

It belongs to the glycosyl hydrolase 5 (cellulase A) family.

The protein localises to the secreted. It catalyses the reaction Random hydrolysis of (1-&gt;4)-beta-D-mannosidic linkages in mannans, galactomannans and glucomannans.. Endo-1,4-mannanase, a crucial enzyme for depolymerization of seed galactomannans and wood galactoglucomannans. The chain is Mannan endo-1,4-beta-mannosidase A (manA) from Aspergillus aculeatus.